The chain runs to 364 residues: Spermidine/putrescine import ATP-binding protein PotA (364 aa).

The 231-residue stretch at L5–I235 folds into the ABC transporter domain. Residue G37–T44 participates in ATP binding.

Belongs to the ABC transporter superfamily. Spermidine/putrescine importer (TC 3.A.1.11.1) family. The complex is composed of two ATP-binding proteins (PotA), two transmembrane proteins (PotB and PotC) and a solute-binding protein (PotD).

The protein resides in the cell membrane. It carries out the reaction ATP + H2O + polyamine-[polyamine-binding protein]Side 1 = ADP + phosphate + polyamineSide 2 + [polyamine-binding protein]Side 1.. Part of the ABC transporter complex PotABCD involved in spermidine/putrescine import. Responsible for energy coupling to the transport system. This chain is Spermidine/putrescine import ATP-binding protein PotA, found in Staphylococcus epidermidis (strain ATCC 35984 / DSM 28319 / BCRC 17069 / CCUG 31568 / BM 3577 / RP62A).